The following is a 497-amino-acid chain: Vacuolar-processing enzyme beta-isozyme 1 (497 aa).

Residues 1–23 form the signal peptide; sequence MAARCWVWGFVVALLAVAAAADG. Residue Asn-153 is glycosylated (N-linked (GlcNAc...) asparagine). His-180 is a catalytic residue. Cys-222 acts as the Nucleophile in catalysis. A disulfide bond links Cys-255 and Cys-269. Asn-340 is a glycosylation site (N-linked (GlcNAc...) asparagine). 2 disulfide bridges follow: Cys-432–Cys-462 and Cys-444–Cys-479.

It belongs to the peptidase C13 family. Post-translationally, auto-catalytic activation.

The protein resides in the protein storage vacuole. It catalyses the reaction Hydrolysis of proteins and small molecule substrates at -Asn-|-Xaa- bonds.. Its function is as follows. Asparagine-specific endopeptidase that may be involved in processing of proteins targeted to vacuoles. Cysteine protease required for post-translational proteolysis of seed storage proteins in the protein storage vacuole (PSV) of developing seeds, by processing of proglutelin precursor to mature glutelin subunits, thus contributing to the formation of protein crystalline structures in PSV. This chain is Vacuolar-processing enzyme beta-isozyme 1, found in Oryza sativa subsp. indica (Rice).